We begin with the raw amino-acid sequence, 432 residues long: Amino-acid acetyltransferase (432 aa).

Residues E286–S425 form the N-acetyltransferase domain.

This sequence belongs to the acetyltransferase family. ArgA subfamily.

Its subcellular location is the cytoplasm. The enzyme catalyses L-glutamate + acetyl-CoA = N-acetyl-L-glutamate + CoA + H(+). It participates in amino-acid biosynthesis; L-arginine biosynthesis; N(2)-acetyl-L-ornithine from L-glutamate: step 1/4. This chain is Amino-acid acetyltransferase, found in Azotobacter vinelandii (strain DJ / ATCC BAA-1303).